A 122-amino-acid chain; its full sequence is Large ribosomal subunit protein uL14 (122 aa).

It belongs to the universal ribosomal protein uL14 family. As to quaternary structure, part of the 50S ribosomal subunit. Forms a cluster with proteins L3 and L19. In the 70S ribosome, L14 and L19 interact and together make contacts with the 16S rRNA in bridges B5 and B8.

In terms of biological role, binds to 23S rRNA. Forms part of two intersubunit bridges in the 70S ribosome. The protein is Large ribosomal subunit protein uL14 of Geobacillus sp. (strain WCH70).